The primary structure comprises 216 residues: MSPSPEQVMQFLYALRSRGVRDRAVLTAMEKIDRGLFVEGVFSGRAYEDVPLPIACGQTISQPSIVGLMTQAAEIGPRHHVLEVGTGAGYQAAILSQLARRVWTVDRHRRLTRAAEARFKALDLTNVTVLTGDGSFGLPDQAPFDRILVTAAAEDPPGPLLAQLREGGIMVVPVGQSDAVQSLIKVTRTESGFDYEEMRSVRFVPLVEGIAPENSA.

S61 is a catalytic residue.

Belongs to the methyltransferase superfamily. L-isoaspartyl/D-aspartyl protein methyltransferase family.

It localises to the cytoplasm. The catalysed reaction is [protein]-L-isoaspartate + S-adenosyl-L-methionine = [protein]-L-isoaspartate alpha-methyl ester + S-adenosyl-L-homocysteine. Its function is as follows. Catalyzes the methyl esterification of L-isoaspartyl residues in peptides and proteins that result from spontaneous decomposition of normal L-aspartyl and L-asparaginyl residues. It plays a role in the repair and/or degradation of damaged proteins. This chain is Protein-L-isoaspartate O-methyltransferase, found in Dinoroseobacter shibae (strain DSM 16493 / NCIMB 14021 / DFL 12).